A 125-amino-acid chain; its full sequence is Small ribosomal subunit protein uS12 (125 aa).

The disordered stretch occupies residues 9–28; that stretch reads RSERSKLKKKTKSPALKQCP. Asp89 carries the post-translational modification 3-methylthioaspartic acid. The segment at 104–125 is disordered; that stretch reads AQGVKDRKQGRSKYGTKRPKKA. The segment covering 113 to 125 has biased composition (basic residues); the sequence is GRSKYGTKRPKKA.

The protein belongs to the universal ribosomal protein uS12 family. Part of the 30S ribosomal subunit. Contacts proteins S8 and S17. May interact with IF1 in the 30S initiation complex.

Its function is as follows. With S4 and S5 plays an important role in translational accuracy. In terms of biological role, interacts with and stabilizes bases of the 16S rRNA that are involved in tRNA selection in the A site and with the mRNA backbone. Located at the interface of the 30S and 50S subunits, it traverses the body of the 30S subunit contacting proteins on the other side and probably holding the rRNA structure together. The combined cluster of proteins S8, S12 and S17 appears to hold together the shoulder and platform of the 30S subunit. In Rippkaea orientalis (strain PCC 8801 / RF-1) (Cyanothece sp. (strain PCC 8801)), this protein is Small ribosomal subunit protein uS12.